Consider the following 318-residue polypeptide: Nucleotide-binding protein Lcho_3490 (318 aa).

35–42 (GISGGGKS) contacts ATP. GTP is bound at residue 84–87 (DVRN).

Belongs to the RapZ-like family.

In terms of biological role, displays ATPase and GTPase activities. The chain is Nucleotide-binding protein Lcho_3490 from Leptothrix cholodnii (strain ATCC 51168 / LMG 8142 / SP-6) (Leptothrix discophora (strain SP-6)).